A 338-amino-acid polypeptide reads, in one-letter code: Ketol-acid reductoisomerase (NADP(+)) (338 aa).

Positions 1 to 181 constitute a KARI N-terminal Rossmann domain; the sequence is MKVFYDKDCD…GGGKGGIIET (181 aa). NADP(+) contacts are provided by residues 24-27, Arg47, and Ser52; that span reads YGSQ. His107 is an active-site residue. Residue Gly133 coordinates NADP(+). The region spanning 182–327 is the KARI C-terminal knotted domain; the sequence is NFKEETETDL…GQLRAMMPWI (146 aa). Mg(2+)-binding residues include Asp190, Glu194, Glu226, and Glu230. Substrate is bound at residue Ser251.

Belongs to the ketol-acid reductoisomerase family. Mg(2+) serves as cofactor.

The catalysed reaction is (2R)-2,3-dihydroxy-3-methylbutanoate + NADP(+) = (2S)-2-acetolactate + NADPH + H(+). It catalyses the reaction (2R,3R)-2,3-dihydroxy-3-methylpentanoate + NADP(+) = (S)-2-ethyl-2-hydroxy-3-oxobutanoate + NADPH + H(+). The protein operates within amino-acid biosynthesis; L-isoleucine biosynthesis; L-isoleucine from 2-oxobutanoate: step 2/4. Its pathway is amino-acid biosynthesis; L-valine biosynthesis; L-valine from pyruvate: step 2/4. Involved in the biosynthesis of branched-chain amino acids (BCAA). Catalyzes an alkyl-migration followed by a ketol-acid reduction of (S)-2-acetolactate (S2AL) to yield (R)-2,3-dihydroxy-isovalerate. In the isomerase reaction, S2AL is rearranged via a Mg-dependent methyl migration to produce 3-hydroxy-3-methyl-2-ketobutyrate (HMKB). In the reductase reaction, this 2-ketoacid undergoes a metal-dependent reduction by NADPH to yield (R)-2,3-dihydroxy-isovalerate. The polypeptide is Ketol-acid reductoisomerase (NADP(+)) (Delftia acidovorans (strain DSM 14801 / SPH-1)).